The primary structure comprises 341 residues: Serpentine receptor class beta-1 (341 aa).

The next 7 membrane-spanning stretches (helical) occupy residues 22-42 (AQFW…IFLL), 66-86 (FLFA…PLFI), 102-122 (GQLS…GFSI), 141-161 (LGPL…FTVF), 188-208 (CWIL…ILLV), 240-260 (LIVS…TIFI), and 279-299 (GVYI…IKAL).

Belongs to the nematode receptor-like protein srb family.

It localises to the membrane. The protein is Serpentine receptor class beta-1 (srb-1) of Caenorhabditis elegans.